We begin with the raw amino-acid sequence, 85 residues long: N.vectensis toxin 6 (85 aa).

Positions M1–A20 are cleaved as a signal peptide. 3 disulfides stabilise this stretch: C46-C82, C48-C71, and C64-C83.

Probable toxin. The polypeptide is N.vectensis toxin 6 (Nematostella vectensis (Starlet sea anemone)).